A 101-amino-acid chain; its full sequence is MTVRILAVCGNGQGSSMIMRMKVDQFLTQSNIDHTVNSCAVGEYKSELSGADIIIASTHIAGEITVTGNKYVVGVRNMLSPADFGPKLLEVIKAHFPQDVK.

The 94-residue stretch at 3-96 (VRILAVCGNG…KLLEVIKAHF (94 aa)) folds into the PTS EIIB type-2 domain. The active-site Phosphocysteine intermediate is the cysteine 9. At cysteine 9 the chain carries Phosphocysteine.

Its subcellular location is the cytoplasm. The catalysed reaction is N(pros)-phospho-L-histidyl-[protein] + L-ascorbate(out) = L-ascorbate 6-phosphate(in) + L-histidyl-[protein]. In terms of biological role, the phosphoenolpyruvate-dependent sugar phosphotransferase system (sugar PTS), a major carbohydrate active transport system, catalyzes the phosphorylation of incoming sugar substrates concomitantly with their translocation across the cell membrane. The enzyme II UlaABC PTS system is involved in ascorbate transport. The polypeptide is Ascorbate-specific PTS system EIIB component (ulaB) (Shigella sonnei (strain Ss046)).